Reading from the N-terminus, the 349-residue chain is Autophagy-related protein 3 (349 aa).

Residues 95–173 form a flexible region region; that stretch reads ALVNDGDDFK…IRDSGADSKN (79 aa). Cys-244 functions as the Glycyl thioester intermediate in the catalytic mechanism. The tract at residues 248 to 325 is handle region; sequence SVMKTLLDRA…DQEVAIRVDQ (78 aa). An ATG8 interaction motif (AIM) motif is present at residues 306-309; it reads WEEV.

The protein belongs to the ATG3 family. Monomer. Interacts with ATG8 through an intermediate thioester bond between Cys-244 and the C-terminal Gly of ATG8. Interacts with the C-terminal region of the E1-like ATG7 enzyme. Also interacts with the ATG12-ATG5 conjugate.

The protein localises to the cytoplasm. Its function is as follows. E2 conjugating enzyme required for the cytoplasm to vacuole transport (Cvt) and autophagy. Required for selective autophagic degradation of the nucleus (nucleophagy) as well as for mitophagy which contributes to regulate mitochondrial quantity and quality by eliminating the mitochondria to a basal level to fulfill cellular energy requirements and preventing excess ROS production. Responsible for the E2-like covalent binding of phosphatidylethanolamine to the C-terminal Gly of ATG8. The ATG12-ATG5 conjugate plays a role of an E3 and promotes the transfer of ATG8 from ATG3 to phosphatidylethanolamine (PE). This step is required for the membrane association of ATG8. The formation of the ATG8-phosphatidylethanolamine conjugate is essential for autophagy and for the cytoplasm to vacuole transport (Cvt). The ATG8-PE conjugate mediates tethering between adjacent membranes and stimulates membrane hemifusion, leading to expansion of the autophagosomal membrane during autophagy. Autophagy is required for proper vegetative growth, asexual/sexual reproduction, and full virulence. Autophagy is particularly involved in the biosynthesis of deoxynivalenol (DON), an important virulence determinant. This chain is Autophagy-related protein 3, found in Gibberella zeae (strain ATCC MYA-4620 / CBS 123657 / FGSC 9075 / NRRL 31084 / PH-1) (Wheat head blight fungus).